Reading from the N-terminus, the 324-residue chain is Fructose-1,6-bisphosphatase class 1 (324 aa).

E88, D107, L109, and D110 together coordinate Mg(2+). Substrate-binding positions include 110–113, N199, and K265; that span reads DGSS. Residue E271 coordinates Mg(2+).

Belongs to the FBPase class 1 family. As to quaternary structure, homotetramer. Mg(2+) is required as a cofactor.

Its subcellular location is the cytoplasm. The catalysed reaction is beta-D-fructose 1,6-bisphosphate + H2O = beta-D-fructose 6-phosphate + phosphate. It participates in carbohydrate biosynthesis; gluconeogenesis. The sequence is that of Fructose-1,6-bisphosphatase class 1 from Neisseria meningitidis serogroup A / serotype 4A (strain DSM 15465 / Z2491).